The chain runs to 182 residues: CASP-like protein 2B1 (182 aa).

Topologically, residues 1–12 (MKLIDRRMRLTE) are cytoplasmic. The chain crosses the membrane as a helical span at residues 13-31 (LLLRCSISVFALLALILVV). Over 32–52 (TDTEVKLIFTIKKTAKYTDMK) the chain is Extracellular. A helical membrane pass occupies residues 53–73 (AVVFLVVANGIAAVYSLLQSV). Residues 74–89 (RCVVGTMKGKVLFSKP) lie on the Cytoplasmic side of the membrane. A helical membrane pass occupies residues 90-110 (LAWAFFSGDQAMAYLNVAAIA). Topologically, residues 111–141 (ATAESGVIAREGEEDLQWMRVCTMYGKFCNQ) are extracellular. A helical membrane pass occupies residues 142–162 (MAIGVSSALLASIAMVFVSCI). The Cytoplasmic portion of the chain corresponds to 163–182 (SAFSLFRLYGATKDRRTTPW).

Belongs to the Casparian strip membrane proteins (CASP) family. In terms of assembly, homodimer and heterodimers.

It is found in the cell membrane. The polypeptide is CASP-like protein 2B1 (Arabidopsis thaliana (Mouse-ear cress)).